We begin with the raw amino-acid sequence, 185 residues long: Methanol dehydrogenase activator (185 aa).

This sequence belongs to the Nudix hydrolase family. As to quaternary structure, homodimer. It depends on Mg(2+) as a cofactor.

Involved in the activation of the NAD-dependent methanol dehydrogenase (MDH). MDH activation by Act involves hydrolytic removal of the nicotinamide mononucleotide (NMN) moiety of the NAD cofactor, changing its ping-pong type of reaction mechanism into a ternary complex reaction mechanism. It requires the presence of magnesium ions and is also able to use ADP-ribose. This Bacillus methanolicus protein is Methanol dehydrogenase activator.